Reading from the N-terminus, the 264-residue chain is Small ribosomal subunit protein uS3 (264 aa).

The KH type-2 domain maps to 39–107 (VREYLKKKLK…PVHVNIEEIR (69 aa)). The interval 214–264 (PVETAAPREEERRPRRAPRGDRPDGARNGRPGGGRGRAPRKADAAPAPEGE) is disordered. The span at 219 to 240 (APREEERRPRRAPRGDRPDGAR) shows a compositional bias: basic and acidic residues.

It belongs to the universal ribosomal protein uS3 family. In terms of assembly, part of the 30S ribosomal subunit. Forms a tight complex with proteins S10 and S14.

Binds the lower part of the 30S subunit head. Binds mRNA in the 70S ribosome, positioning it for translation. In Bordetella avium (strain 197N), this protein is Small ribosomal subunit protein uS3.